A 1690-amino-acid polypeptide reads, in one-letter code: Trinucleotide repeat-containing gene 6C protein (1690 aa).

3 stretches are compositionally biased toward polar residues: residues 1–12 (MATGSAQSSFPS), 19–36 (GSHGTNGALVQSPSNQSA), and 160–183 (AEPQTSTSQNVSFSVQPQNLNTDG). Disordered regions lie at residues 1–42 (MATG…AGGT), 158–202 (ESAE…AMQT), 226–848 (PGAN…EPVV), and 863–928 (CKPA…TPGK). Residues 1–921 (MATGSAQSSF…GNTSKKGLQK (921 aa)) form a sufficient for interaction with argonaute family proteins region. Residues 184 to 198 (PNNTNPMNSSPNPIN) show a composition bias toward low complexity. Over residues 255 to 288 (NPATGSTNCGFSQGNGDTVNSALSAKQNGSSSAV) the composition is skewed to polar residues. An Omega-N-methylarginine modification is found at R313. The span at 362-374 (GWDSASAASQTPA) shows a compositional bias: polar residues. Residues 384–404 (SWAKATSSGTTASEGSSDGSG) show a composition bias toward low complexity. The segment covering 415–426 (GTGEGRRRDKGV) has biased composition (basic and acidic residues). The span at 444 to 459 (LSNSGWGQTPVKQNTA) shows a compositional bias: polar residues. Basic and acidic residues predominate over residues 464–474 (ESPRSERKNDN). Phosphoserine is present on S465. Composition is skewed to polar residues over residues 482 to 510 (IATQPSNSGGKTDGSIMNSTNTSSVSGWV), 519 to 530 (ANTSWGDSNNKA), 540 to 551 (SISSTAVNNAAA), 644 to 656 (GTNAKVNPGTNWG), and 663 to 678 (PQQNWAHKPQDNNVSN). S714 bears the Phosphoserine mark. Low complexity predominate over residues 754–771 (SSTTAPATPTTPTSSSTT). A Phosphothreonine modification is found at T776. Residues 778–788 (PSHQAGTQLNR) are compositionally biased toward polar residues. The segment covering 901 to 915 (SQESSSSCSSWGNTS) has biased composition (low complexity). A UBA domain is found at 928–973 (KQDEAWIMSRLIKQLTDMGFPREPAEEALKSNSMNLDQAMSALLEK). Phosphoserine is present on S1006. Positions 1156-1214 (QLQLAYQRLQIQQQMLQAQRNVSGPMRQQEQQVARTITNLQQQIQQHQRQLAQALLVKQ) form a coiled coil. Disordered regions lie at residues 1212–1337 (VKQP…PPGK), 1351–1380 (QNSESPASPPVAVPHSWSRAKSDSDKISNG), 1397–1421 (GLQNIDPENDPDVTPGSVPTGPTIN), 1441–1486 (IKST…PSST), and 1600–1625 (PPTSSWQSSSGGSQPRLGTSGSTHGL). The segment covering 1214–1223 (QPPPPPPPPH) has biased composition (pro residues). The silencing domain; interaction with CNOT1 and PAN3 stretch occupies residues 1260 to 1690 (NTFAPYPLAG…PGDLLSGESI (431 aa)). Polar residues predominate over residues 1272 to 1321 (PNMNVNSIDMSSGLSVKDPSQSQSRLPQWTHPNSMGNLSSAASPLDQNPS). The required for interaction with PABPC1 stretch occupies residues 1371 to 1417 (KSDSDKISNGSSISWPPEFHPGVPWKGLQNIDPENDPDVTPGSVPTG). The segment at 1371-1690 (KSDSDKISNG…PGDLLSGESI (320 aa)) is sufficient for translational repression when tethered to a target mRNA. Positions 1381 to 1399 (SSISWPPEFHPGVPWKGLQ) are PABPC1-interacting motif-2 (PAM2). Residues 1441–1457 (IKSTWSSGPASHTQASL) are compositionally biased toward polar residues. Positions 1565 to 1632 (AQKSLHMCVL…HGLVRSDTAH (68 aa)) constitute an RRM domain. Residues 1596 to 1690 (GQALPPTSSW…PGDLLSGESI (95 aa)) form an interaction with the CCR4-NOT complex region. Positions 1603–1613 (SSWQSSSGGSQ) are enriched in low complexity.

This sequence belongs to the GW182 family. Interacts with one or more of the argonaute family proteins AGO1, AGO2, AGO3 and AGO4. Interacts with CNOT1; the interaction mediates the association with the CCR4-NOT complex. Interacts with PAN3; the interaction mediates the association with the PAN complex.

In terms of biological role, plays a role in RNA-mediated gene silencing by micro-RNAs (miRNAs). Required for miRNA-dependent translational repression of complementary mRNAs by argonaute family proteins As scaffoldng protein associates with argonaute proteins bound to partially complementary mRNAs and simultaneously can recruit CCR4-NOT and PAN deadenylase complexes. This is Trinucleotide repeat-containing gene 6C protein (Tnrc6c) from Mus musculus (Mouse).